A 180-amino-acid polypeptide reads, in one-letter code: Acireductone dioxygenase (180 aa).

The Fe(2+) site is built by H99, H101, E105, and H145. H99, H101, E105, and H145 together coordinate Ni(2+).

This sequence belongs to the acireductone dioxygenase (ARD) family. Monomer. The cofactor is Fe(2+). It depends on Ni(2+) as a cofactor.

It catalyses the reaction 1,2-dihydroxy-5-(methylsulfanyl)pent-1-en-3-one + O2 = 3-(methylsulfanyl)propanoate + CO + formate + 2 H(+). The enzyme catalyses 1,2-dihydroxy-5-(methylsulfanyl)pent-1-en-3-one + O2 = 4-methylsulfanyl-2-oxobutanoate + formate + 2 H(+). It participates in amino-acid biosynthesis; L-methionine biosynthesis via salvage pathway; L-methionine from S-methyl-5-thio-alpha-D-ribose 1-phosphate: step 5/6. Catalyzes 2 different reactions between oxygen and the acireductone 1,2-dihydroxy-3-keto-5-methylthiopentene (DHK-MTPene) depending upon the metal bound in the active site. Fe-containing acireductone dioxygenase (Fe-ARD) produces formate and 2-keto-4-methylthiobutyrate (KMTB), the alpha-ketoacid precursor of methionine in the methionine recycle pathway. Ni-containing acireductone dioxygenase (Ni-ARD) produces methylthiopropionate, carbon monoxide and formate, and does not lie on the methionine recycle pathway. The protein is Acireductone dioxygenase of Geobacillus kaustophilus (strain HTA426).